A 283-amino-acid polypeptide reads, in one-letter code: Bifunctional protein FolD (283 aa).

NADP(+)-binding positions include 164–166, S189, and I230; that span reads GRS.

It belongs to the tetrahydrofolate dehydrogenase/cyclohydrolase family. As to quaternary structure, homodimer.

The catalysed reaction is (6R)-5,10-methylene-5,6,7,8-tetrahydrofolate + NADP(+) = (6R)-5,10-methenyltetrahydrofolate + NADPH. It carries out the reaction (6R)-5,10-methenyltetrahydrofolate + H2O = (6R)-10-formyltetrahydrofolate + H(+). Its pathway is one-carbon metabolism; tetrahydrofolate interconversion. Its function is as follows. Catalyzes the oxidation of 5,10-methylenetetrahydrofolate to 5,10-methenyltetrahydrofolate and then the hydrolysis of 5,10-methenyltetrahydrofolate to 10-formyltetrahydrofolate. The chain is Bifunctional protein FolD from Lacticaseibacillus casei (strain BL23) (Lactobacillus casei).